We begin with the raw amino-acid sequence, 392 residues long: Galactokinase (392 aa).

Positions 37, 43, 44, and 46 each coordinate alpha-D-galactose. ATP is bound by residues Gly-136, Gly-138, Ser-140, and Ser-141. Asp-186 contributes to the alpha-D-galactose binding site. Catalysis depends on Asp-186, which acts as the Proton acceptor. Ser-230 carries the post-translational modification Phosphoserine. Tyr-236 contributes to the alpha-D-galactose binding site.

The protein belongs to the GHMP kinase family. GalK subfamily. Homodimer.

It catalyses the reaction alpha-D-galactose + ATP = alpha-D-galactose 1-phosphate + ADP + H(+). The protein operates within carbohydrate metabolism; galactose metabolism. Catalyzes the transfer of a phosphate from ATP to alpha-D-galactose and participates in the first committed step in the catabolism of galactose. This Homo sapiens (Human) protein is Galactokinase.